A 245-amino-acid chain; its full sequence is 1-(5-phosphoribosyl)-5-[(5-phosphoribosylamino)methylideneamino] imidazole-4-carboxamide isomerase (245 aa).

Asp-7 acts as the Proton acceptor in catalysis. The active-site Proton donor is Asp-129.

It belongs to the HisA/HisF family.

Its subcellular location is the cytoplasm. The enzyme catalyses 1-(5-phospho-beta-D-ribosyl)-5-[(5-phospho-beta-D-ribosylamino)methylideneamino]imidazole-4-carboxamide = 5-[(5-phospho-1-deoxy-D-ribulos-1-ylimino)methylamino]-1-(5-phospho-beta-D-ribosyl)imidazole-4-carboxamide. Its pathway is amino-acid biosynthesis; L-histidine biosynthesis; L-histidine from 5-phospho-alpha-D-ribose 1-diphosphate: step 4/9. The polypeptide is 1-(5-phosphoribosyl)-5-[(5-phosphoribosylamino)methylideneamino] imidazole-4-carboxamide isomerase (Shewanella baltica (strain OS155 / ATCC BAA-1091)).